Consider the following 125-residue polypeptide: Large ribosomal subunit protein bL12 (125 aa).

This sequence belongs to the bacterial ribosomal protein bL12 family. As to quaternary structure, homodimer. Part of the ribosomal stalk of the 50S ribosomal subunit. Forms a multimeric L10(L12)X complex, where L10 forms an elongated spine to which 2 to 4 L12 dimers bind in a sequential fashion. Binds GTP-bound translation factors.

Its function is as follows. Forms part of the ribosomal stalk which helps the ribosome interact with GTP-bound translation factors. Is thus essential for accurate translation. The chain is Large ribosomal subunit protein bL12 from Hyphomonas neptunium (strain ATCC 15444).